A 343-amino-acid chain; its full sequence is tRNA N6-adenosine threonylcarbamoyltransferase (343 aa).

Fe cation-binding residues include histidine 120 and histidine 124. Residues 142-146 (VVSGG), aspartate 175, glycine 188, aspartate 192, and asparagine 281 each bind substrate. Position 310 (aspartate 310) interacts with Fe cation.

Belongs to the KAE1 / TsaD family. Fe(2+) serves as cofactor.

It is found in the cytoplasm. The enzyme catalyses L-threonylcarbamoyladenylate + adenosine(37) in tRNA = N(6)-L-threonylcarbamoyladenosine(37) in tRNA + AMP + H(+). Its function is as follows. Required for the formation of a threonylcarbamoyl group on adenosine at position 37 (t(6)A37) in tRNAs that read codons beginning with adenine. Is involved in the transfer of the threonylcarbamoyl moiety of threonylcarbamoyl-AMP (TC-AMP) to the N6 group of A37, together with TsaE and TsaB. TsaD likely plays a direct catalytic role in this reaction. This is tRNA N6-adenosine threonylcarbamoyltransferase from Bacillus anthracis.